A 755-amino-acid chain; its full sequence is Polyribonucleotide nucleotidyltransferase (755 aa).

Residues Asp-545 and Asp-551 each coordinate Mg(2+). Positions 611 to 670 (PRITAITVPVNKIGEVIGPKGKTINSITEETGANISIEEDGTVYVSAASGAAAEAAIEKI) constitute a KH domain. Residues 682–751 (GERFLGTVVK…NRGKISLAPV (70 aa)) form the S1 motif domain.

Belongs to the polyribonucleotide nucleotidyltransferase family. Requires Mg(2+) as cofactor.

Its subcellular location is the cytoplasm. It catalyses the reaction RNA(n+1) + phosphate = RNA(n) + a ribonucleoside 5'-diphosphate. Functionally, involved in mRNA degradation. Catalyzes the phosphorolysis of single-stranded polyribonucleotides processively in the 3'- to 5'-direction. The sequence is that of Polyribonucleotide nucleotidyltransferase from Corynebacterium diphtheriae (strain ATCC 700971 / NCTC 13129 / Biotype gravis).